Consider the following 766-residue polypeptide: NADH-dependent flavin oxidoreductase iliE (766 aa).

The segment covering 1 to 13 (MSEQLGSHITTPS) has biased composition (polar residues). Residues 1–24 (MSEQLGSHITTPSSHDDASKDKRP) are disordered. Basic and acidic residues predominate over residues 14–24 (SHDDASKDKRP). Residue Asn30 is glycosylated (N-linked (GlcNAc...) asparagine). Position 61–64 (61–64 (AATA)) interacts with FMN. Residues Asn70 and Asn136 are each glycosylated (N-linked (GlcNAc...) asparagine). Position 143 (Gln143) interacts with FMN. Substrate is bound at residue 224–227 (HAGH). FMN is bound at residue 385 to 386 (AR). The 72-residue stretch at 551-622 (TPYDILAMRK…SKRSLYDTQG (72 aa)) folds into the J domain. N-linked (GlcNAc...) asparagine glycans are attached at residues Asn634, Asn650, and Asn654. A helical transmembrane segment spans residues 675-695 (MYMSNGVFATLVVMMCMIGAF).

Belongs to the NADH:flavin oxidoreductase/NADH oxidase family.

The protein resides in the membrane. Its function is as follows. NADH-dependent flavin oxidoreductase; part of the gene cluster that mediates the biosynthesis of ilicicolin H, a 4-hydroxy-2-pyridonealkaloid that has potent and broad antifungal activities by inhibiting the mitochondrial respiration chain. The biosynthesis of ilicicolin H starts with formation of the tetramic acid by the hybrid PKS-NRPS synthetase iliA with the partnering trans-enoyl reductase iliB since iliA lacks a designated enoylreductase (ER) domain. The cytochrome P450 monooxygenase iliC then catalyzes the ring expansion of the tetramate to the acyclic 2-pyridone. The pericyclase iliD further converts the acyclic 2-pyridone into 8-epi-ilicicolin H. 8-epi-ilicicolin H might then spontaneously convert to ilicicolin H since ilicicolin H is produced in the absence of the epimerase iliE, in contrast to what was observed for the Talaromyces variabilis ilicolin H biosynthetic pathway. This chain is NADH-dependent flavin oxidoreductase iliE, found in Neonectria sp. (strain DH2).